Reading from the N-terminus, the 190-residue chain is uncharacterized protein (190 aa).

Belongs to the Iojap/RsfS family.

This is an uncharacterized protein from Caenorhabditis elegans.